A 643-amino-acid polypeptide reads, in one-letter code: Threonine--tRNA ligase (643 aa).

The 61-residue stretch at 1 to 61 (MPIITLPDGS…SEDATLEIIT (61 aa)) folds into the TGS domain. The segment at 243–534 (DHRKIGKALD…ITEEYAGFFP (292 aa)) is catalytic. The Zn(2+) site is built by Cys334, His385, and His511.

The protein belongs to the class-II aminoacyl-tRNA synthetase family. In terms of assembly, homodimer. Zn(2+) serves as cofactor.

It localises to the cytoplasm. The catalysed reaction is tRNA(Thr) + L-threonine + ATP = L-threonyl-tRNA(Thr) + AMP + diphosphate + H(+). Functionally, catalyzes the attachment of threonine to tRNA(Thr) in a two-step reaction: L-threonine is first activated by ATP to form Thr-AMP and then transferred to the acceptor end of tRNA(Thr). Also edits incorrectly charged L-seryl-tRNA(Thr). The polypeptide is Threonine--tRNA ligase (Glaesserella parasuis serovar 5 (strain SH0165) (Haemophilus parasuis)).